We begin with the raw amino-acid sequence, 787 residues long: Transcriptional corepressor LEUNIG_HOMOLOG (787 aa).

The tract at residues 1–88 is required for SEU-binding; sequence MAQSNWEADK…IEAQQGKAKE (88 aa). Residues 8–40 form the LisH domain; it reads ADKMLDVYIYDYLVKKKLHNTAKSFMTEGKVSP. Residues 77–106 are a coiled coil; sequence AYIEAQQGKAKEQQMQIQQLQMMRQAQMQR. Positions 299 to 413 are disordered; that stretch reads NMTNSPMYGG…TPSTHTPVDG (115 aa). Low complexity-rich tracts occupy residues 336–346 and 355–372; these read SIGSPMQSSSS and QQSS…QSQQ. Residues 380–409 are compositionally biased toward polar residues; that stretch reads PSSSGPANSTGTGNTVGPSNSQPSTPSTHT. WD repeat units lie at residues 508-547, 550-589, 593-633, 635-671, 675-715, 717-755, and 757-787; these read KSAS…VEST, EHAH…YFLR, GHAA…VRAV, GAST…KRVN, GHSS…HELS, SGNK…CMTV, and GHEC…KIWK.

Forms corepressor complexes with SLK1 and SLK2; LUH is the transcription repressor subunit and SLK1 and SLK2 the specific DNA-binding adapters. Interacts with SEU. Binds to YAB3, YAB5 and YAB1/FIL; these complexes promote adaxial cell identity in leaves as well as embryonic shoot apical meristem (SAM) initiation and postembryonic SAM maintenance. As to expression, expressed in roots, stems, leaves, seedlings, apex, flowers, siliques, flower organs and seeds (including seed coat).

It localises to the nucleus. Its function is as follows. Transcription repressor subunit of the SEU-SLK1 and SEU-SLK2 transcriptional corepressor of abiotic stress (e.g. salt and osmotic stress) response genes, by means of an epigenetic process involving histone modification (e.g. H3K9 and H3K14 acetylation), probably by recruiting HDAC, to facilitate the condensation of chromatin thus preventing transcription at the target genes. Can also act as a transcription activator. Implicated in embryo and floral development. Involved in post-synthesis cell wall modifications necessary for mucilage extrusion from seeds upon imbibition, probably by promoting the expression of genes required for mucilage maturation (e.g. MUM2). Regulates the maintenance on leaf polarity and meristem activity as well as the initiation of embryonic shoot apical meristem (SAM) development. The sequence is that of Transcriptional corepressor LEUNIG_HOMOLOG from Arabidopsis thaliana (Mouse-ear cress).